Here is a 277-residue protein sequence, read N- to C-terminus: Phosphate import ATP-binding protein PstB 2 (277 aa).

One can recognise an ABC transporter domain in the interval 31–272 (IEVPGLNLFY…PAKKQTEDYI (242 aa)). 63–70 (GPSGCGKS) lines the ATP pocket.

It belongs to the ABC transporter superfamily. Phosphate importer (TC 3.A.1.7) family. In terms of assembly, the complex is composed of two ATP-binding proteins (PstB), two transmembrane proteins (PstC and PstA) and a solute-binding protein (PstS).

It localises to the cell inner membrane. The enzyme catalyses phosphate(out) + ATP + H2O = ADP + 2 phosphate(in) + H(+). Part of the ABC transporter complex PstSACB involved in phosphate import. Responsible for energy coupling to the transport system. This is Phosphate import ATP-binding protein PstB 2 from Pseudomonas savastanoi pv. phaseolicola (strain 1448A / Race 6) (Pseudomonas syringae pv. phaseolicola (strain 1448A / Race 6)).